A 467-amino-acid polypeptide reads, in one-letter code: Proton extrusion protein PxcA (467 aa).

The tract at residues 183–205 is disordered; sequence TSPPQLIRPRTEQNKKPRGKADT. Residues 191 to 203 show a composition bias toward basic and acidic residues; it reads PRTEQNKKPRGKA. The next 4 helical transmembrane spans lie at 249-269, 352-372, 391-411, and 427-447; these read FILL…ALIV, IFSV…IMVL, IIIL…WEVI, and FIFL…KYWI.

Belongs to the CemA family.

The protein resides in the cell inner membrane. Functionally, required for H(+) efflux immediately after light irradiation to form a rapid H(+) concentration gradient across the thylakoid membranes. Together with PxcL, contributes to transient H(+) uptake following dark to light transition. This Trichormus variabilis (strain ATCC 29413 / PCC 7937) (Anabaena variabilis) protein is Proton extrusion protein PxcA.